Consider the following 449-residue polypeptide: Bifunctional protein GlmU (449 aa).

Residues 1 to 230 form a pyrophosphorylase region; the sequence is MASSKLAVIV…EAELLGVNAR (230 aa). Residues 11–14, Lys25, Gln74, 79–80, 102–104, Gly142, Glu156, Asn171, and Asn228 each bind UDP-N-acetyl-alpha-D-glucosamine; these read LAAG, GT, and YGD. Asp104 serves as a coordination point for Mg(2+). Mg(2+) is bound at residue Asn228. A linker region spans residues 231-251; it reads SELAVAEALVQARLREAAMDN. Residues 252–449 are N-acetyltransferase; the sequence is GATLIDPATV…QQAAKKAKKD (198 aa). Positions 317 and 335 each coordinate UDP-N-acetyl-alpha-D-glucosamine. The active-site Proton acceptor is His347. 2 residues coordinate UDP-N-acetyl-alpha-D-glucosamine: Tyr350 and Asn361. Acetyl-CoA contacts are provided by residues Ala364, 370-371, Ser389, Ala407, and Arg424; that span reads NY.

This sequence in the N-terminal section; belongs to the N-acetylglucosamine-1-phosphate uridyltransferase family. The protein in the C-terminal section; belongs to the transferase hexapeptide repeat family. Homotrimer. The cofactor is Mg(2+).

The protein localises to the cytoplasm. It catalyses the reaction alpha-D-glucosamine 1-phosphate + acetyl-CoA = N-acetyl-alpha-D-glucosamine 1-phosphate + CoA + H(+). It carries out the reaction N-acetyl-alpha-D-glucosamine 1-phosphate + UTP + H(+) = UDP-N-acetyl-alpha-D-glucosamine + diphosphate. It participates in nucleotide-sugar biosynthesis; UDP-N-acetyl-alpha-D-glucosamine biosynthesis; N-acetyl-alpha-D-glucosamine 1-phosphate from alpha-D-glucosamine 6-phosphate (route II): step 2/2. The protein operates within nucleotide-sugar biosynthesis; UDP-N-acetyl-alpha-D-glucosamine biosynthesis; UDP-N-acetyl-alpha-D-glucosamine from N-acetyl-alpha-D-glucosamine 1-phosphate: step 1/1. It functions in the pathway bacterial outer membrane biogenesis; LPS lipid A biosynthesis. Its function is as follows. Catalyzes the last two sequential reactions in the de novo biosynthetic pathway for UDP-N-acetylglucosamine (UDP-GlcNAc). The C-terminal domain catalyzes the transfer of acetyl group from acetyl coenzyme A to glucosamine-1-phosphate (GlcN-1-P) to produce N-acetylglucosamine-1-phosphate (GlcNAc-1-P), which is converted into UDP-GlcNAc by the transfer of uridine 5-monophosphate (from uridine 5-triphosphate), a reaction catalyzed by the N-terminal domain. The chain is Bifunctional protein GlmU from Paramagnetospirillum magneticum (strain ATCC 700264 / AMB-1) (Magnetospirillum magneticum).